The primary structure comprises 529 residues: Membrane-bound lytic murein transglycosylase F (529 aa).

A signal peptide spans M1–I27. Residues E28–I287 are non-LT domain. The tract at residues G288 to P529 is LT domain. Residue E332 is part of the active site. The interval E510–P529 is disordered. Residues S519–P529 show a composition bias toward polar residues.

It in the N-terminal section; belongs to the bacterial solute-binding protein 3 family. This sequence in the C-terminal section; belongs to the transglycosylase Slt family.

Its subcellular location is the cell outer membrane. The enzyme catalyses Exolytic cleavage of the (1-&gt;4)-beta-glycosidic linkage between N-acetylmuramic acid (MurNAc) and N-acetylglucosamine (GlcNAc) residues in peptidoglycan, from either the reducing or the non-reducing ends of the peptidoglycan chains, with concomitant formation of a 1,6-anhydrobond in the MurNAc residue.. Functionally, murein-degrading enzyme that degrades murein glycan strands and insoluble, high-molecular weight murein sacculi, with the concomitant formation of a 1,6-anhydromuramoyl product. Lytic transglycosylases (LTs) play an integral role in the metabolism of the peptidoglycan (PG) sacculus. Their lytic action creates space within the PG sacculus to allow for its expansion as well as for the insertion of various structures such as secretion systems and flagella. The sequence is that of Membrane-bound lytic murein transglycosylase F from Vibrio vulnificus (strain CMCP6).